A 142-amino-acid chain; its full sequence is Hemoglobin subunit zeta (142 aa).

N-acetylserine is present on Ser-2. In terms of domain architecture, Globin spans 2–142 (SLTKTERTII…VSSVLTEKYR (141 aa)). Position 29 is a phosphothreonine (Thr-29). At Ser-53 the chain carries Phosphoserine. Position 59 (His-59) interacts with heme b. Phosphoserine occurs at positions 73 and 82. His-88 is a binding site for heme b.

It belongs to the globin family. Heterotetramer of two zeta chains and two epsilon chains in early embryonic hemoglobin Gower-1; two zeta chains and two gamma chains in fetal hemoglobin Portland-1. Heterotetramer of two zeta chains and two beta chains in hemoglobin Portland-2, detected in fetuses and neonates with homozygous alpha-thalassemia. Detected in fetal erythrocytes (at protein level).

Functionally, the zeta chain is an alpha-type chain of mammalian embryonic hemoglobin. The sequence is that of Hemoglobin subunit zeta (HBZ) from Homo sapiens (Human).